The following is an 88-amino-acid chain: Small ribosomal subunit protein uS15 (88 aa).

Polar residues predominate over residues 1–12 (MLTNTDRQQVIA). The segment at 1-23 (MLTNTDRQQVIAQYQRAPGDTGS) is disordered.

Belongs to the universal ribosomal protein uS15 family. Part of the 30S ribosomal subunit. Forms a bridge to the 50S subunit in the 70S ribosome, contacting the 23S rRNA.

One of the primary rRNA binding proteins, it binds directly to 16S rRNA where it helps nucleate assembly of the platform of the 30S subunit by binding and bridging several RNA helices of the 16S rRNA. Its function is as follows. Forms an intersubunit bridge (bridge B4) with the 23S rRNA of the 50S subunit in the ribosome. This is Small ribosomal subunit protein uS15 from Psychrobacter sp. (strain PRwf-1).